A 379-amino-acid polypeptide reads, in one-letter code: Cytochrome b (379 aa).

Transmembrane regions (helical) follow at residues 34 to 54 (FGSLLGICLITQILTGLLLAM), 78 to 99 (WLIRNLHANGASFFFICIYLHI), 114 to 134 (WNTGVVLLLTLMATAFVGYVL), and 179 to 199 (FFALHFLLPFLIAGITLIHLT). Positions 84 and 98 each coordinate heme b. Positions 183 and 197 each coordinate heme b. Position 202 (histidine 202) interacts with a ubiquinone. A run of 4 helical transmembrane segments spans residues 227–247 (LKDALGFALMFIPLLTLAFFS), 289–309 (LGGVLALAASVLILFLIPFLH), 321–341 (LSQILFWLLVANLLILTWIGS), and 348–368 (FIIIGQMASFSYFLILLVLFP).

The protein belongs to the cytochrome b family. As to quaternary structure, the cytochrome bc1 complex contains 11 subunits: 3 respiratory subunits (MT-CYB, CYC1 and UQCRFS1), 2 core proteins (UQCRC1 and UQCRC2) and 6 low-molecular weight proteins (UQCRH/QCR6, UQCRB/QCR7, UQCRQ/QCR8, UQCR10/QCR9, UQCR11/QCR10 and a cleavage product of UQCRFS1). This cytochrome bc1 complex then forms a dimer. Requires heme b as cofactor.

The protein resides in the mitochondrion inner membrane. Its function is as follows. Component of the ubiquinol-cytochrome c reductase complex (complex III or cytochrome b-c1 complex) that is part of the mitochondrial respiratory chain. The b-c1 complex mediates electron transfer from ubiquinol to cytochrome c. Contributes to the generation of a proton gradient across the mitochondrial membrane that is then used for ATP synthesis. The chain is Cytochrome b (MT-CYB) from Rhea americana (Greater rhea).